The sequence spans 353 residues: Guanine nucleotide-binding protein alpha-1 subunit (353 aa).

Residue Gly2 is the site of N-myristoyl glycine attachment. Cys3 carries the S-palmitoyl cysteine lipid modification. Residues 32–353 (NEIKMLLLGA…QVNLRDCGLL (322 aa)) form the G-alpha domain. Residues 35 to 48 (KMLLLGAGESGKST) are G1 motif. Residues Glu43, Ser44, Gly45, Lys46, Ser47, Thr48, Asp150, Leu175, Thr181, Gly203, Asn269, Lys270, Asp272, and Ala325 each coordinate GTP. Position 47 (Ser47) interacts with Mg(2+). Residues 173–181 (DVLRSRVKT) form a G2 motif region. Thr181 is a binding site for Mg(2+). Positions 196 to 205 (YKLFDVGGQR) are G3 motif. The interval 265–272 (ILFLNKID) is G4 motif. Positions 323-328 (TCATDT) are G5 motif.

It belongs to the G-alpha family. As to quaternary structure, g proteins are composed of 3 units; alpha, beta and gamma. The alpha chain contains the guanine nucleotide binding site. It depends on Mg(2+) as a cofactor.

Functionally, guanine nucleotide-binding proteins (G proteins) are involved as modulators or transducers in various transmembrane signaling systems. This chain is Guanine nucleotide-binding protein alpha-1 subunit (GPA1), found in Mycosarcoma maydis (Corn smut fungus).